Reading from the N-terminus, the 80-residue chain is Exodeoxyribonuclease 7 small subunit (80 aa).

This sequence belongs to the XseB family. In terms of assembly, heterooligomer composed of large and small subunits.

It is found in the cytoplasm. It catalyses the reaction Exonucleolytic cleavage in either 5'- to 3'- or 3'- to 5'-direction to yield nucleoside 5'-phosphates.. Its function is as follows. Bidirectionally degrades single-stranded DNA into large acid-insoluble oligonucleotides, which are then degraded further into small acid-soluble oligonucleotides. The polypeptide is Exodeoxyribonuclease 7 small subunit (Maridesulfovibrio salexigens (strain ATCC 14822 / DSM 2638 / NCIMB 8403 / VKM B-1763) (Desulfovibrio salexigens)).